The chain runs to 908 residues: NADH-quinone oxidoreductase subunit G (908 aa).

Residues 2–83 enclose the 2Fe-2S ferredoxin-type domain; the sequence is ATIHVDGKEY…GTFISIDDEE (82 aa). 4 residues coordinate [2Fe-2S] cluster: Cys34, Cys45, Cys48, and Cys67. Residues 83-122 enclose the 4Fe-4S His(Cys)3-ligated-type domain; sequence EAKQFRESVVEWLMTNHPHDCPVCEEGGNCHLQDMTVMTG. Positions 99, 103, 106, 112, 151, 154, 157, 201, 228, 231, 235, and 263 each coordinate [4Fe-4S] cluster. In terms of domain architecture, 4Fe-4S Mo/W bis-MGD-type spans 221 to 277; sequence MQFAPSICQQCSIGCNISPGERYGELRRIENRYNGTVNHYFLCDRGRFGYGYVNLKD.

This sequence belongs to the complex I 75 kDa subunit family. Composed of 13 different subunits. Subunits NuoCD, E, F, and G constitute the peripheral sector of the complex. [2Fe-2S] cluster serves as cofactor. [4Fe-4S] cluster is required as a cofactor.

The catalysed reaction is a quinone + NADH + 5 H(+)(in) = a quinol + NAD(+) + 4 H(+)(out). Its function is as follows. NDH-1 shuttles electrons from NADH, via FMN and iron-sulfur (Fe-S) centers, to quinones in the respiratory chain. The immediate electron acceptor for the enzyme in this species is believed to be ubiquinone. Couples the redox reaction to proton translocation (for every two electrons transferred, four hydrogen ions are translocated across the cytoplasmic membrane), and thus conserves the redox energy in a proton gradient. This Shigella flexneri protein is NADH-quinone oxidoreductase subunit G (nuoG).